Here is a 338-residue protein sequence, read N- to C-terminus: Nicotinate-nucleotide--dimethylbenzimidazole phosphoribosyltransferase (338 aa).

Catalysis depends on glutamate 305, which acts as the Proton acceptor.

The protein belongs to the CobT family.

The enzyme catalyses 5,6-dimethylbenzimidazole + nicotinate beta-D-ribonucleotide = alpha-ribazole 5'-phosphate + nicotinate + H(+). Its pathway is nucleoside biosynthesis; alpha-ribazole biosynthesis; alpha-ribazole from 5,6-dimethylbenzimidazole: step 1/2. Catalyzes the synthesis of alpha-ribazole-5'-phosphate from nicotinate mononucleotide (NAMN) and 5,6-dimethylbenzimidazole (DMB). This chain is Nicotinate-nucleotide--dimethylbenzimidazole phosphoribosyltransferase, found in Novosphingobium aromaticivorans (strain ATCC 700278 / DSM 12444 / CCUG 56034 / CIP 105152 / NBRC 16084 / F199).